The chain runs to 337 residues: GTPase Obg (337 aa).

The 159-residue stretch at 1–159 folds into the Obg domain; sequence MQFIDYVKIY…RWVILELKLL (159 aa). The OBG-type G domain maps to 160–331; that stretch reads ADVGLIGLPN…LLHYLSEKVG (172 aa). GTP-binding positions include 166–173, 191–195, 213–216, 283–286, and 312–314; these read GLPNAGKS, FTTLI, DIPG, TKID, and SAV. Mg(2+)-binding residues include Ser173 and Thr193.

It belongs to the TRAFAC class OBG-HflX-like GTPase superfamily. OBG GTPase family. Monomer. Requires Mg(2+) as cofactor.

It localises to the cytoplasm. Functionally, an essential GTPase which binds GTP, GDP and possibly (p)ppGpp with moderate affinity, with high nucleotide exchange rates and a fairly low GTP hydrolysis rate. Plays a role in control of the cell cycle, stress response, ribosome biogenesis and in those bacteria that undergo differentiation, in morphogenesis control. The protein is GTPase Obg of Thermodesulfovibrio yellowstonii (strain ATCC 51303 / DSM 11347 / YP87).